Here is a 249-residue protein sequence, read N- to C-terminus: Mediator of RNA polymerase II transcription subunit 19 (249 aa).

Disordered stretches follow at residues 1–68 and 178–249; these read MEGF…SSRR and QPPK…SGLR. Residues 9-18 show a composition bias toward low complexity; that stretch reads AASEPSSIPS. Over residues 45–56 the composition is skewed to pro residues; that stretch reads VPGPPLPIPPPL. Basic residues-rich tracts occupy residues 179–190 and 221–233; these read PPKKKNKKHKQS and RRKKKDKKKKKSR.

The protein belongs to the Mediator complex subunit 19 family. In terms of assembly, component of the Mediator complex.

The protein resides in the nucleus. Component of the Mediator complex, a coactivator involved in the regulated transcription of nearly all RNA polymerase II-dependent genes. Mediator functions as a bridge to convey information from gene-specific regulatory proteins to the basal RNA polymerase II transcription machinery. Mediator is recruited to promoters by direct interactions with regulatory proteins and serves as a scaffold for the assembly of a functional preinitiation complex with RNA polymerase II and the general transcription factors. The sequence is that of Mediator of RNA polymerase II transcription subunit 19 (med19) from Xenopus tropicalis (Western clawed frog).